The following is a 131-amino-acid chain: uncharacterized protein (131 aa).

A disordered region spans residues 15–43 (QLQAEHGSAPSNIASGPSSNQQQQEVQDE). Over residues 23–34 (APSNIASGPSSN) the composition is skewed to polar residues.

This sequence belongs to the PDCD5 family.

This is an uncharacterized protein from Schizosaccharomyces pombe (strain 972 / ATCC 24843) (Fission yeast).